A 207-amino-acid chain; its full sequence is ATP phosphoribosyltransferase (207 aa).

Belongs to the ATP phosphoribosyltransferase family. Short subfamily. In terms of assembly, heteromultimer composed of HisG and HisZ subunits.

It localises to the cytoplasm. It carries out the reaction 1-(5-phospho-beta-D-ribosyl)-ATP + diphosphate = 5-phospho-alpha-D-ribose 1-diphosphate + ATP. Its pathway is amino-acid biosynthesis; L-histidine biosynthesis; L-histidine from 5-phospho-alpha-D-ribose 1-diphosphate: step 1/9. Functionally, catalyzes the condensation of ATP and 5-phosphoribose 1-diphosphate to form N'-(5'-phosphoribosyl)-ATP (PR-ATP). Has a crucial role in the pathway because the rate of histidine biosynthesis seems to be controlled primarily by regulation of HisG enzymatic activity. The chain is ATP phosphoribosyltransferase (hisG) from Dictyoglomus turgidum (strain DSM 6724 / Z-1310).